We begin with the raw amino-acid sequence, 158 residues long: Trafficking protein particle complex subunit 6B (158 aa).

Belongs to the TRAPP small subunits family. BET3 subfamily. In terms of assembly, homodimer. Part of a TRAPP complex. Heterodimer with TRAPPC3. The heterodimer TRAPPC6B-TRAPPC3 interacts with TRAPPC1 likely providing a core for TRAPP complex formation. In terms of tissue distribution, widely expressed. Expressed in lung, heart, liver, spleen, brain and kidney.

The protein localises to the golgi apparatus. It localises to the cis-Golgi network. Its subcellular location is the endoplasmic reticulum. Its function is as follows. Component of a transport protein particle (TRAPP) complex that may function in specific stages of inter-organelle traffic. Specifically involved in the early development of neural circuitry, likely by controlling the frequency and amplitude of intracellular calcium transients implicated in the regulation of neuron differentiation and survival. The chain is Trafficking protein particle complex subunit 6B from Mus musculus (Mouse).